Consider the following 368-residue polypeptide: Queuine tRNA-ribosyltransferase (368 aa).

The active-site Proton acceptor is the Asp-89. Substrate contacts are provided by residues 89 to 93 (DSGGF), Asp-143, and Gly-216. Residues 247-253 (GVGKPED) form an RNA binding region. Asp-266 serves as the catalytic Nucleophile. An RNA binding; important for wobble base 34 recognition region spans residues 271 to 275 (TRNAR). The Zn(2+) site is built by Cys-304, Cys-306, Cys-309, and His-335.

It belongs to the queuine tRNA-ribosyltransferase family. As to quaternary structure, homodimer. Within each dimer, one monomer is responsible for RNA recognition and catalysis, while the other monomer binds to the replacement base PreQ1. Requires Zn(2+) as cofactor.

The enzyme catalyses 7-aminomethyl-7-carbaguanine + guanosine(34) in tRNA = 7-aminomethyl-7-carbaguanosine(34) in tRNA + guanine. The protein operates within tRNA modification; tRNA-queuosine biosynthesis. Its function is as follows. Catalyzes the base-exchange of a guanine (G) residue with the queuine precursor 7-aminomethyl-7-deazaguanine (PreQ1) at position 34 (anticodon wobble position) in tRNAs with GU(N) anticodons (tRNA-Asp, -Asn, -His and -Tyr). Catalysis occurs through a double-displacement mechanism. The nucleophile active site attacks the C1' of nucleotide 34 to detach the guanine base from the RNA, forming a covalent enzyme-RNA intermediate. The proton acceptor active site deprotonates the incoming PreQ1, allowing a nucleophilic attack on the C1' of the ribose to form the product. After dissociation, two additional enzymatic reactions on the tRNA convert PreQ1 to queuine (Q), resulting in the hypermodified nucleoside queuosine (7-(((4,5-cis-dihydroxy-2-cyclopenten-1-yl)amino)methyl)-7-deazaguanosine). The sequence is that of Queuine tRNA-ribosyltransferase from Buchnera aphidicola subsp. Schizaphis graminum (strain Sg).